Reading from the N-terminus, the 687-residue chain is Glycine--tRNA ligase beta subunit (687 aa).

This sequence belongs to the class-II aminoacyl-tRNA synthetase family. Tetramer of two alpha and two beta subunits.

The protein localises to the cytoplasm. It carries out the reaction tRNA(Gly) + glycine + ATP = glycyl-tRNA(Gly) + AMP + diphosphate. The sequence is that of Glycine--tRNA ligase beta subunit from Geotalea daltonii (strain DSM 22248 / JCM 15807 / FRC-32) (Geobacter daltonii).